The primary structure comprises 233 residues: Transmembrane protein 40 (233 aa).

N-acetylmethionine is present on Met-1. Over residues 1–14 the composition is skewed to polar residues; it reads METSASSSQPQDNS. Positions 1–143 are disordered; that stretch reads METSASSSQP…RRGSDPASGE (143 aa). Low complexity predominate over residues 50–70; it reads SSSSSSSSSSSSSSSSSSSSS. A compositionally biased stretch (gly residues) spans 93-104; sequence YPHGNGSPGPGH. Over residues 105–114 the composition is skewed to basic and acidic residues; the sequence is GEPDVLKDEL. Ser-137 carries the post-translational modification Phosphoserine. 2 helical membrane passes run 160–180 and 187–207; these read FFHF…YHYY and LGVG…FGLV.

It localises to the membrane. This is Transmembrane protein 40 (TMEM40) from Homo sapiens (Human).